The following is a 194-amino-acid chain: Holliday junction branch migration complex subunit RuvA (194 aa).

The segment at 1–64 is domain I; it reads MIARLSGILV…EDAQLLYGFG (64 aa). The domain II stretch occupies residues 65-141; that stretch reads SDQERATFRQ…FAIDGGTALA (77 aa). Positions 141–144 are flexible linker; sequence AGSN. The tract at residues 145–194 is domain III; the sequence is PAKSASSDVLNALLALGYNEREALAAVKQLPADIAVAEGIKLSLKSLSKT.

The protein belongs to the RuvA family. Homotetramer. Forms an RuvA(8)-RuvB(12)-Holliday junction (HJ) complex. HJ DNA is sandwiched between 2 RuvA tetramers; dsDNA enters through RuvA and exits via RuvB. An RuvB hexamer assembles on each DNA strand where it exits the tetramer. Each RuvB hexamer is contacted by two RuvA subunits (via domain III) on 2 adjacent RuvB subunits; this complex drives branch migration. In the full resolvosome a probable DNA-RuvA(4)-RuvB(12)-RuvC(2) complex forms which resolves the HJ.

It localises to the cytoplasm. Its function is as follows. The RuvA-RuvB-RuvC complex processes Holliday junction (HJ) DNA during genetic recombination and DNA repair, while the RuvA-RuvB complex plays an important role in the rescue of blocked DNA replication forks via replication fork reversal (RFR). RuvA specifically binds to HJ cruciform DNA, conferring on it an open structure. The RuvB hexamer acts as an ATP-dependent pump, pulling dsDNA into and through the RuvAB complex. HJ branch migration allows RuvC to scan DNA until it finds its consensus sequence, where it cleaves and resolves the cruciform DNA. The sequence is that of Holliday junction branch migration complex subunit RuvA from Methylobacillus flagellatus (strain ATCC 51484 / DSM 6875 / VKM B-1610 / KT).